The sequence spans 1183 residues: MEEFDLVKTLHKTSSSVGSDENSLHSLGLNLNTDRSSPHLSTNGVSSFSGKTRPSVIQGTVEVLTSLMQELQNSGKTDSELWKNCETRWLQLFNLVEKQCQEQIVAQQEQFHNQIQHIQEEIKNLVKLQTSSASLASCEGNSSNKQVSSESQMGFFSLSSERNESVIHYPESTEPEIQQEMSTSQPDCNVDSCSVSSGYGTFCISELNLYKSKDPKEFMEHIDVPKGQYVAPAVPAESLVDGVKNENFYIQTPEECHVSLKEDVSISPGEFEHNFLGENKVSEVYSGKTNSNAITSWAQKLKQNQPKRAHVEDGGSRSKQGNEQSKKTPIEKSDFAAATHPRAFYLSKPDETPNAWMSDSGTGLTYWKLEEKDMHHSLPETLEKTFISLSSTDVSPNQSNTSNEMKLPSLKDIYYKKQRENKQLPERNLTSASNPNHPPEVLTLDPTLHMKPKQQISGIQPHGLPNALDDRISFSPDSVLEPSMSSPSDIDSFSQASNVTSQLPGFPKYPSHTKASPVDSWKNQTFQNESRTSSTFPSVYTITSNDISVNTVDEENTVMVASASVSQSQLPGTANSVPECISLTSLEDPVILSKIRQNLKEKHARHIADLRAYYESEINSLKQKLEAKEISGVEDWKITNQILVDRCGQLDSALHEATSRVRTLENKNNLLEIEVNDLRERFSAASSASKILQERIEEMRTSSKEKDNTIIRLKSRLQDLEEAFENAYKLSDDKEAQLKQENKMFQDLLGEYESLGKEHRRVKDALNTTENKLLDAYTQISDLKRMISKLEAQVKQVEHENMLSLRHNSRIHVRPSRANTLATSDVSRRKWLIPGAEYSIFTGQPLDTQDSNVDNQLEETCSLGHRSPLEKDSSPGSSSTSLLIKKQRETSDTPIMRALKELDEGKIFKNWGTQTEKEDTSNINPRQTETSVNASRSPEKCAQQRQKRLNSASQRSSSLPPSNRKSSTPTKREIMLTPVTVAYSPKRSPKENLSPGFSHLLSKNESSPIRFDILLDDLDTVPVSTLQRTNPRKQLQFLPLDDSEEKTYSEKATDNHVNHSSCPEPVPNGVKKVSVRTAWEKNKSVSYEQCKPVSVTPQGNDFEYTAKIRTLAETERFFDELTKEKDQIEAALSRMPSPGGRITLQTRLNQEALEDRLERINRELGSVRMTLKKFHVLRTSANL.

3 disordered regions span residues 28–52 (GLNL…SGKT), 300–334 (KLKQ…EKSD), and 472–495 (ISFS…SFSQ). The segment covering 324-334 (QSKKTPIEKSD) has biased composition (basic and acidic residues). The interval 401-800 (TSNEMKLPSL…EAQVKQVEHE (400 aa)) is required for its centrosomal localization. Positions 451–500 (KPKQQISGIQPHGLPNALDDRISFSPDSVLEPSMSSPSDIDSFSQASNVT) are interaction with CEP97. A compositionally biased stretch (low complexity) spans 483–495 (SMSSPSDIDSFSQ). The stretch at 609–804 (DLRAYYESEI…KQVEHENMLS (196 aa)) forms a coiled coil. Ser-781 is subject to Phosphoserine; by TTBK2. Lys-784 is covalently cross-linked (Glycyl lysine isopeptide (Lys-Gly) (interchain with G-Cter in ubiquitin)). Ser-788 bears the Phosphoserine; by TTBK2 mark. The interval 801 to 1031 (NMLSLRHNSR…PVSTLQRTNP (231 aa)) is interaction with KIF24. Disordered regions lie at residues 863 to 894 (LGHR…SDTP) and 910 to 999 (NWGT…GFSH). Residues 921–936 (SNINPRQTETSVNASR) are compositionally biased toward polar residues. Residues 949–967 (LNSASQRSSSLPPSNRKSS) are compositionally biased toward low complexity. Residue Ser-994 is modified to Phosphoserine. The stretch at 1109-1174 (RTLAETERFF…GSVRMTLKKF (66 aa)) forms a coiled coil.

As to quaternary structure, interacts with CCP110, CEP97 and KIF24. TTBK2-mediated phosphorylation at Ser-781 and Ser-788, promotes its ubiquitination at Lys-784 leading to proteasomal degradation, loss of MPHOSPH9 facilitates the removal of the CP110-CEP97 complex from the mother centrioles, promoting the initiation of ciliogenesis. Phosphorylated in M (mitotic) phase. In terms of processing, ubiquitinated at Lys-784, leading to proteasomal degradation.

Its subcellular location is the cytoplasm. The protein localises to the cytoskeleton. It is found in the microtubule organizing center. It localises to the centrosome. The protein resides in the centriole. Its subcellular location is the golgi apparatus membrane. Functionally, negatively regulates cilia formation by recruiting the CP110-CEP97 complex (a negative regulator of ciliogenesis) at the distal end of the mother centriole in ciliary cells. At the beginning of cilia formation, MPHOSPH9 undergoes TTBK2-mediated phosphorylation and degradation via the ubiquitin-proteasome system and removes itself and the CP110-CEP97 complex from the distal end of the mother centriole, which subsequently promotes cilia formation. The sequence is that of M-phase phosphoprotein 9 (MPHOSPH9) from Homo sapiens (Human).